Here is a 144-residue protein sequence, read N- to C-terminus: Vasopressin-neurophysin 2-copeptin (144 aa).

A disulfide bridge links cysteine 1 with cysteine 6. At glycine 9 the chain carries Glycine amide. 7 disulfides stabilise this stretch: cysteine 22–cysteine 66, cysteine 25–cysteine 39, cysteine 33–cysteine 56, cysteine 40–cysteine 46, cysteine 73–cysteine 85, cysteine 79–cysteine 97, and cysteine 86–cysteine 91. Residue asparagine 112 is glycosylated (N-linked (GlcNAc...) asparagine).

Belongs to the vasopressin/oxytocin family. Interacts with vasopressin receptors V1bR/AVPR1B (Ki=85 pM), V1aR/AVPR1A (Ki=0.6 nM) and V2R/AVPR2 (Ki=4.9 nM). Interacts with oxytocin receptor (OXTR) (Ki=110 nM).

The protein resides in the secreted. Its function is as follows. Neurophysin 2 specifically binds vasopressin. Functionally, vasopressin has a direct antidiuretic action on the kidney, it also causes vasoconstriction of the peripheral vessels. Acts by binding to vasopressin receptors (V1bR/AVPR1B, V1aR/AVPR1A, and V2R/AVPR2). The sequence is that of Vasopressin-neurophysin 2-copeptin (AVP) from Cavia porcellus (Guinea pig).